Consider the following 132-residue polypeptide: DNA-directed RNA polymerase subunit Rpo8 (132 aa).

Belongs to the archaeal Rpo8 RNA polymerase subunit family. As to quaternary structure, part of the 13-subunit RNA polymerase complex.

Its subcellular location is the cytoplasm. It catalyses the reaction RNA(n) + a ribonucleoside 5'-triphosphate = RNA(n+1) + diphosphate. Functionally, DNA-dependent RNA polymerase (RNAP) catalyzes the transcription of DNA into RNA using the four ribonucleoside triphosphates as substrates. The polypeptide is DNA-directed RNA polymerase subunit Rpo8 (Saccharolobus solfataricus (strain ATCC 35092 / DSM 1617 / JCM 11322 / P2) (Sulfolobus solfataricus)).